A 439-amino-acid polypeptide reads, in one-letter code: tRNA-2-methylthio-N(6)-dimethylallyladenosine synthase (439 aa).

One can recognise an MTTase N-terminal domain in the interval 2 to 119 (KYIYIKTWGC…LPKMIDEVEK (118 aa)). The [4Fe-4S] cluster site is built by Cys-11, Cys-48, Cys-82, Cys-156, Cys-160, and Cys-163. A Radical SAM core domain is found at 142–374 (KKKGYTADIS…QERINIQTML (233 aa)). The 63-residue stretch at 377–439 (RKMFGSIQSV…HTHSLKGELF (63 aa)) folds into the TRAM domain.

The protein belongs to the methylthiotransferase family. MiaB subfamily. As to quaternary structure, monomer. It depends on [4Fe-4S] cluster as a cofactor.

It is found in the cytoplasm. It carries out the reaction N(6)-dimethylallyladenosine(37) in tRNA + (sulfur carrier)-SH + AH2 + 2 S-adenosyl-L-methionine = 2-methylsulfanyl-N(6)-dimethylallyladenosine(37) in tRNA + (sulfur carrier)-H + 5'-deoxyadenosine + L-methionine + A + S-adenosyl-L-homocysteine + 2 H(+). Its function is as follows. Catalyzes the methylthiolation of N6-(dimethylallyl)adenosine (i(6)A), leading to the formation of 2-methylthio-N6-(dimethylallyl)adenosine (ms(2)i(6)A) at position 37 in tRNAs that read codons beginning with uridine. This Buchnera aphidicola subsp. Acyrthosiphon pisum (strain APS) (Acyrthosiphon pisum symbiotic bacterium) protein is tRNA-2-methylthio-N(6)-dimethylallyladenosine synthase.